A 226-amino-acid polypeptide reads, in one-letter code: ATP synthase F(0) complex subunit a (226 aa).

6 helical membrane-spanning segments follow: residues F6–F26, W68–L88, Q97–F117, I138–V158, I164–I184, and A189–I209.

This sequence belongs to the ATPase A chain family. Component of the ATP synthase complex composed at least of ATP5F1A/subunit alpha, ATP5F1B/subunit beta, ATP5MC1/subunit c (homooctomer), MT-ATP6/subunit a, MT-ATP8/subunit 8, ATP5ME/subunit e, ATP5MF/subunit f, ATP5MG/subunit g, ATP5MK/subunit k, ATP5MJ/subunit j, ATP5F1C/subunit gamma, ATP5F1D/subunit delta, ATP5F1E/subunit epsilon, ATP5PF/subunit F6, ATP5PB/subunit b, ATP5PD/subunit d, ATP5PO/subunit OSCP. ATP synthase complex consists of a soluble F(1) head domain (subunits alpha(3) and beta(3)) - the catalytic core - and a membrane F(0) domain - the membrane proton channel (subunits c, a, 8, e, f, g, k and j). These two domains are linked by a central stalk (subunits gamma, delta, and epsilon) rotating inside the F1 region and a stationary peripheral stalk (subunits F6, b, d, and OSCP). Interacts with DNAJC30; interaction is direct.

It is found in the mitochondrion inner membrane. It carries out the reaction H(+)(in) = H(+)(out). In terms of biological role, subunit a, of the mitochondrial membrane ATP synthase complex (F(1)F(0) ATP synthase or Complex V) that produces ATP from ADP in the presence of a proton gradient across the membrane which is generated by electron transport complexes of the respiratory chain. ATP synthase complex consist of a soluble F(1) head domain - the catalytic core - and a membrane F(1) domain - the membrane proton channel. These two domains are linked by a central stalk rotating inside the F(1) region and a stationary peripheral stalk. During catalysis, ATP synthesis in the catalytic domain of F(1) is coupled via a rotary mechanism of the central stalk subunits to proton translocation. With the subunit c (ATP5MC1), forms the proton-conducting channel in the F(0) domain, that contains two crucial half-channels (inlet and outlet) that facilitate proton movement from the mitochondrial intermembrane space (IMS) into the matrix. Protons are taken up via the inlet half-channel and released through the outlet half-channel, following a Grotthuss mechanism. This Ovis aries (Sheep) protein is ATP synthase F(0) complex subunit a.